The primary structure comprises 273 residues: MIFLLLMLSLELQLHQIAALFTVTVPKELYIIEHGSNVTLECNFDTGSHVNLGAITASLQKVENDTSPHRERATLLEEQLPLGKASFHIPQVQVRDEGQYQCIIIYGVAWDYKYLTLKVKASYRKINTHILKVPETDEVELTCQATGYPLAEVSWPNVSVPANTSHSRTPEGLYQVTSVLRLKPPPGRNFSCVFWNTHVRELTLASIDLQSQMEPRTHPTWLLHIFIPFCIIAFIFIATVIALRKQLCQKLYSSKDTTKRPVTTTKREVNSAI.

A signal peptide spans 1 to 19 (MIFLLLMLSLELQLHQIAA). Residues 20–220 (LFTVTVPKEL…SQMEPRTHPT (201 aa)) lie on the Extracellular side of the membrane. The region spanning 21–118 (FTVTVPKELY…AWDYKYLTLK (98 aa)) is the Ig-like V-type domain. Asparagine 37, asparagine 64, asparagine 157, asparagine 163, and asparagine 189 each carry an N-linked (GlcNAc...) asparagine glycan. Cystine bridges form between cysteine 42–cysteine 102 and cysteine 143–cysteine 192. The Ig-like C2-type domain maps to 122-203 (SYRKINTHIL…FWNTHVRELT (82 aa)). The helical transmembrane segment at 221–241 (WLLHIFIPFCIIAFIFIATVI) threads the bilayer. The Cytoplasmic segment spans residues 242–273 (ALRKQLCQKLYSSKDTTKRPVTTTKREVNSAI).

Belongs to the immunoglobulin superfamily. BTN/MOG family. Interacts with PDCD1. As to expression, highly expressed in heart, placenta, pancreas, lung and liver and weakly expressed in spleen, lymph nodes and thymus.

It localises to the secreted. The protein localises to the endomembrane system. The protein resides in the cell membrane. Functionally, involved in the costimulatory signal, essential for T-cell proliferation and IFNG production in a PDCD1-independent manner. Interaction with PDCD1 inhibits T-cell proliferation by blocking cell cycle progression and cytokine production. The chain is Programmed cell death 1 ligand 2 (PDCD1LG2) from Homo sapiens (Human).